Here is a 399-residue protein sequence, read N- to C-terminus: Centrosomal protein 43 (399 aa).

Residues Asp70–Gln102 form the LisH domain. 2 disordered regions span residues Glu139–His218 and Asn232–Lys308. Thr143 carries the post-translational modification Phosphothreonine. Phosphoserine is present on residues Ser152, Ser156, and Ser160. Residues Gly163–Ser172 show a composition bias toward polar residues. Thr170 bears the Phosphothreonine mark. Residues Pro175–Ser186 are compositionally biased toward basic residues. Phosphoserine is present on Ser202. The span at Ser205 to His218 shows a compositional bias: low complexity. Phosphothreonine is present on Thr234. The segment covering Pro245–Phe256 has biased composition (acidic residues). Residues Pro259–Lys275 are compositionally biased toward basic and acidic residues. The segment covering Ala286–Leu302 has biased composition (low complexity). A phosphoserine mark is found at Ser301 and Ser326. A disordered region spans residues Thr331–Ile353. A Phosphotyrosine modification is found at Tyr337.

This sequence belongs to the CEP43 family. As to quaternary structure, homodimer. Part of a ternary complex that contains CEP350, CEP43 and MAPRE1. Interacts directly with CEP350 and MAPRE1. Interacts with CEP19. Interacts (via N-terminus) with CEP350 (via C-terminus). In terms of tissue distribution, ubiquitous. Highly expressed in heart, liver, muscle, kidney, intestine, colon, adrenal gland, prostate, testis, and pancreas.

It localises to the cytoplasm. The protein localises to the cytoskeleton. Its subcellular location is the microtubule organizing center. It is found in the centrosome. The protein resides in the centriole. It localises to the cilium basal body. In terms of biological role, required for anchoring microtubules to the centrosomes. Required for ciliation. The protein is Centrosomal protein 43 of Homo sapiens (Human).